The following is a 346-amino-acid chain: (R,R)-butanediol dehydrogenase (346 aa).

Zn(2+) is bound by residues cysteine 37, histidine 70, and glutamate 152.

The protein belongs to the zinc-containing alcohol dehydrogenase family. As to quaternary structure, homotetramer. Interacts with BrxC. Requires Zn(2+) as cofactor.

The protein localises to the cytoplasm. The protein resides in the secreted. The catalysed reaction is (R,R)-butane-2,3-diol + NAD(+) = (R)-acetoin + NADH + H(+). This chain is (R,R)-butanediol dehydrogenase, found in Bacillus subtilis (strain 168).